The primary structure comprises 317 residues: Lipoyl synthase (317 aa).

Cysteine 59, cysteine 64, cysteine 70, cysteine 85, cysteine 89, cysteine 92, and serine 298 together coordinate [4Fe-4S] cluster. Residues tryptophan 71–leucine 287 enclose the Radical SAM core domain.

The protein belongs to the radical SAM superfamily. Lipoyl synthase family. It depends on [4Fe-4S] cluster as a cofactor.

It localises to the cytoplasm. It catalyses the reaction [[Fe-S] cluster scaffold protein carrying a second [4Fe-4S](2+) cluster] + N(6)-octanoyl-L-lysyl-[protein] + 2 oxidized [2Fe-2S]-[ferredoxin] + 2 S-adenosyl-L-methionine + 4 H(+) = [[Fe-S] cluster scaffold protein] + N(6)-[(R)-dihydrolipoyl]-L-lysyl-[protein] + 4 Fe(3+) + 2 hydrogen sulfide + 2 5'-deoxyadenosine + 2 L-methionine + 2 reduced [2Fe-2S]-[ferredoxin]. It participates in protein modification; protein lipoylation via endogenous pathway; protein N(6)-(lipoyl)lysine from octanoyl-[acyl-carrier-protein]: step 2/2. Catalyzes the radical-mediated insertion of two sulfur atoms into the C-6 and C-8 positions of the octanoyl moiety bound to the lipoyl domains of lipoate-dependent enzymes, thereby converting the octanoylated domains into lipoylated derivatives. This is Lipoyl synthase from Bartonella bacilliformis (strain ATCC 35685 / KC583 / Herrer 020/F12,63).